The sequence spans 351 residues: Ribosomal RNA large subunit methyltransferase M (351 aa).

S-adenosyl-L-methionine contacts are provided by residues serine 183, 216 to 219, aspartate 235, aspartate 255, and aspartate 271; that span reads APGG. Catalysis depends on lysine 300, which acts as the Proton acceptor.

This sequence belongs to the class I-like SAM-binding methyltransferase superfamily. RNA methyltransferase RlmE family. RlmM subfamily. Monomer.

The protein localises to the cytoplasm. It catalyses the reaction cytidine(2498) in 23S rRNA + S-adenosyl-L-methionine = 2'-O-methylcytidine(2498) in 23S rRNA + S-adenosyl-L-homocysteine + H(+). Its function is as follows. Catalyzes the 2'-O-methylation at nucleotide C2498 in 23S rRNA. This chain is Ribosomal RNA large subunit methyltransferase M, found in Ectopseudomonas mendocina (strain ymp) (Pseudomonas mendocina).